We begin with the raw amino-acid sequence, 140 residues long: Putative pre-16S rRNA nuclease (140 aa).

Belongs to the YqgF nuclease family.

It localises to the cytoplasm. Could be a nuclease involved in processing of the 5'-end of pre-16S rRNA. The sequence is that of Putative pre-16S rRNA nuclease from Yersinia pseudotuberculosis serotype O:1b (strain IP 31758).